The following is a 535-amino-acid chain: Berberine bridge enzyme-like 3 (535 aa).

The first 19 residues, 1–19 (MKEALFGLYLVLLVSGLEA), serve as a signal peptide directing secretion. C32 and C95 are oxidised to a cystine. An N-linked (GlcNAc...) asparagine glycan is attached at N52. Residues 73 to 247 (NNKNLLAIVV…LSWKINLVEV (175 aa)) form the FAD-binding PCMH-type domain. The segment at residues 110-172 (HDNEGLSYVS…QTLAFPAGIC (63 aa)) is a cross-link (6-(S-cysteinyl)-8alpha-(pros-histidyl)-FAD (His-Cys)). 8 N-linked (GlcNAc...) asparagine glycosylation sites follow: N214, N257, N292, N321, N341, N415, N439, and N444.

This sequence belongs to the oxygen-dependent FAD-linked oxidoreductase family. FAD serves as cofactor. In terms of processing, the FAD cofactor is bound via a bicovalent 6-S-cysteinyl, 8alpha-N1-histidyl FAD linkage.

The protein localises to the endoplasmic reticulum. It is found in the cell membrane. It localises to the secreted. Its subcellular location is the cell wall. Flavin-dependent oxidoreductase involved in the biosynthetic pathway to 4-hydroxyindole-3-carbonyl nitrile (4-OH-ICN), a cyanogenic metabolite required for inducible pathogen defense. Converts indole cyanohydrin into indole-3-carbonyl nitrile (ICN). The sequence is that of Berberine bridge enzyme-like 3 from Arabidopsis thaliana (Mouse-ear cress).